A 187-amino-acid chain; its full sequence is UPF0340 protein SPD_0576 (187 aa).

Belongs to the UPF0340 family.

This chain is UPF0340 protein SPD_0576, found in Streptococcus pneumoniae serotype 2 (strain D39 / NCTC 7466).